The primary structure comprises 79 residues: RNA-binding protein Hfq (79 aa).

The Sm domain occupies 10-70 (DVFLKTVRKQ…ISTIMPGQPI (61 aa)).

This sequence belongs to the Hfq family. In terms of assembly, homohexamer.

Functionally, RNA chaperone that binds small regulatory RNA (sRNAs) and mRNAs to facilitate mRNA translational regulation in response to envelope stress, environmental stress and changes in metabolite concentrations. Also binds with high specificity to tRNAs. The polypeptide is RNA-binding protein Hfq (Bartonella bacilliformis (strain ATCC 35685 / KC583 / Herrer 020/F12,63)).